The primary structure comprises 163 residues: UPF0478 protein SERP1299 (163 aa).

Residues 7-27 form a helical membrane-spanning segment; sequence IAGIIAAIAFLILCIGIVVVL.

It belongs to the UPF0478 family.

It is found in the cell membrane. In Staphylococcus epidermidis (strain ATCC 35984 / DSM 28319 / BCRC 17069 / CCUG 31568 / BM 3577 / RP62A), this protein is UPF0478 protein SERP1299.